A 123-amino-acid polypeptide reads, in one-letter code: Small ribosomal subunit protein uS12 (123 aa).

Aspartate 89 bears the 3-methylthioaspartic acid mark.

This sequence belongs to the universal ribosomal protein uS12 family. Part of the 30S ribosomal subunit. Contacts proteins S8 and S17. May interact with IF1 in the 30S initiation complex.

With S4 and S5 plays an important role in translational accuracy. Its function is as follows. Interacts with and stabilizes bases of the 16S rRNA that are involved in tRNA selection in the A site and with the mRNA backbone. Located at the interface of the 30S and 50S subunits, it traverses the body of the 30S subunit contacting proteins on the other side and probably holding the rRNA structure together. The combined cluster of proteins S8, S12 and S17 appears to hold together the shoulder and platform of the 30S subunit. The polypeptide is Small ribosomal subunit protein uS12 (Sinorhizobium medicae (strain WSM419) (Ensifer medicae)).